Consider the following 199-residue polypeptide: Probable nicotinate-nucleotide adenylyltransferase (199 aa).

Belongs to the NadD family.

The catalysed reaction is nicotinate beta-D-ribonucleotide + ATP + H(+) = deamido-NAD(+) + diphosphate. Its pathway is cofactor biosynthesis; NAD(+) biosynthesis; deamido-NAD(+) from nicotinate D-ribonucleotide: step 1/1. Catalyzes the reversible adenylation of nicotinate mononucleotide (NaMN) to nicotinic acid adenine dinucleotide (NaAD). The chain is Probable nicotinate-nucleotide adenylyltransferase from Leptospira interrogans serogroup Icterohaemorrhagiae serovar copenhageni (strain Fiocruz L1-130).